We begin with the raw amino-acid sequence, 457 residues long: Cation efflux system protein CusC (457 aa).

The N-terminal stretch at 1–17 (MSPCKLLPFCVALALTG) is a signal peptide. Cys18 carries the N-palmitoyl cysteine lipid modification. Cys18 carries S-diacylglycerol cysteine lipidation.

This sequence belongs to the outer membrane factor (OMF) (TC 1.B.17) family. Homotrimer. Component of the cus efflux system composed of CusA, CusB, CusC and CusF.

Its subcellular location is the cell outer membrane. Forms pores that allow passive diffusion of cations across the outer membrane. Part of a cation efflux system that mediates resistance to copper and silver. In pathogenic strains it allows the bacteria to invade brain microvascular endothelial cells (BMEC) thus allowing it to cross the blood-brain barrier and cause neonatal meningitis. This chain is Cation efflux system protein CusC (cusC), found in Escherichia coli (strain K12).